Reading from the N-terminus, the 554-residue chain is Valerianol synthase TPS1A (554 aa).

Positions 307 and 311 each coordinate Mg(2+). Positions 326 to 330 (VQRWD) match the DDXXD motif motif. Mg(2+)-binding residues include Asp452, Ser456, and Glu460.

The protein belongs to the terpene synthase family. The cofactor is Mg(2+). Expressed in flowers.

It catalyses the reaction (2E,6E)-farnesyl diphosphate + H2O = valerianol + diphosphate. The protein operates within secondary metabolite biosynthesis; terpenoid biosynthesis. Functionally, terpene synthase that catalyzes the biosynthesis of the terpene valerianol, which is a volatile compound of floral scent. The polypeptide is Valerianol synthase TPS1A (Camellia hiemalis (Camellia)).